The primary structure comprises 239 residues: tRNA (guanine-N(7)-)-methyltransferase (239 aa).

The S-adenosyl-L-methionine site is built by Glu-69, Glu-94, Asp-121, and Asp-144. Residue Asp-144 is part of the active site. Residue Lys-148 coordinates substrate. The segment at 150-155 is interaction with RNA; the sequence is RHNKRR. Substrate is bound by residues Asp-180 and 217–220; that span reads TKFE.

Belongs to the class I-like SAM-binding methyltransferase superfamily. TrmB family. In terms of assembly, monomer.

It carries out the reaction guanosine(46) in tRNA + S-adenosyl-L-methionine = N(7)-methylguanosine(46) in tRNA + S-adenosyl-L-homocysteine. It functions in the pathway tRNA modification; N(7)-methylguanine-tRNA biosynthesis. In terms of biological role, catalyzes the formation of N(7)-methylguanine at position 46 (m7G46) in tRNA. The protein is tRNA (guanine-N(7)-)-methyltransferase of Escherichia coli O6:K15:H31 (strain 536 / UPEC).